Reading from the N-terminus, the 149-residue chain is Large ribosomal subunit protein uL15 (149 aa).

2 stretches are compositionally biased toward basic residues: residues 1–14 and 21–30; these read MPSR…HRGH and RIGKHRKHPG. Residues 1–39 form a disordered region; it reads MPSRFTKTRKHRGHVSAGKGRIGKHRKHPGGRGMAGGQH. 2 consecutive short sequence motifs (nuclear localization signal) follow at residues 7-13 and 24-30; these read KTRKHRG and KHRKHPG. Lysine 96 is covalently cross-linked (Glycyl lysine isopeptide (Lys-Gly) (interchain with G-Cter in ubiquitin)).

This sequence belongs to the universal ribosomal protein uL15 family. Component of the large ribosomal subunit (LSU). Mature yeast ribosomes consist of a small (40S) and a large (60S) subunit. The 40S small subunit contains 1 molecule of ribosomal RNA (18S rRNA) and 33 different proteins (encoded by 57 genes). The large 60S subunit contains 3 rRNA molecules (25S, 5.8S and 5S rRNA) and 46 different proteins (encoded by 81 genes).

It localises to the cytoplasm. Component of the ribosome, a large ribonucleoprotein complex responsible for the synthesis of proteins in the cell. The small ribosomal subunit (SSU) binds messenger RNAs (mRNAs) and translates the encoded message by selecting cognate aminoacyl-transfer RNA (tRNA) molecules. The large subunit (LSU) contains the ribosomal catalytic site termed the peptidyl transferase center (PTC), which catalyzes the formation of peptide bonds, thereby polymerizing the amino acids delivered by tRNAs into a polypeptide chain. The nascent polypeptides leave the ribosome through a tunnel in the LSU and interact with protein factors that function in enzymatic processing, targeting, and the membrane insertion of nascent chains at the exit of the ribosomal tunnel. In Saccharomyces cerevisiae (strain ATCC 204508 / S288c) (Baker's yeast), this protein is Large ribosomal subunit protein uL15.